Here is a 416-residue protein sequence, read N- to C-terminus: Multifunctional CCA protein (416 aa).

Positions 8 and 11 each coordinate ATP. CTP is bound by residues glycine 8 and arginine 11. 2 residues coordinate Mg(2+): aspartate 21 and aspartate 23. Residues arginine 91, arginine 137, and arginine 140 each contribute to the ATP site. CTP-binding residues include arginine 91, arginine 137, and arginine 140. The HD domain maps to 228–329; it reads TGLHTMMVLA…IKLFDKADFW (102 aa).

This sequence belongs to the tRNA nucleotidyltransferase/poly(A) polymerase family. Bacterial CCA-adding enzyme type 1 subfamily. Monomer. Can also form homodimers and oligomers. Mg(2+) is required as a cofactor. The cofactor is Ni(2+).

The catalysed reaction is a tRNA precursor + 2 CTP + ATP = a tRNA with a 3' CCA end + 3 diphosphate. The enzyme catalyses a tRNA with a 3' CCA end + 2 CTP + ATP = a tRNA with a 3' CCACCA end + 3 diphosphate. In terms of biological role, catalyzes the addition and repair of the essential 3'-terminal CCA sequence in tRNAs without using a nucleic acid template. Adds these three nucleotides in the order of C, C, and A to the tRNA nucleotide-73, using CTP and ATP as substrates and producing inorganic pyrophosphate. tRNA 3'-terminal CCA addition is required both for tRNA processing and repair. Also involved in tRNA surveillance by mediating tandem CCA addition to generate a CCACCA at the 3' terminus of unstable tRNAs. While stable tRNAs receive only 3'-terminal CCA, unstable tRNAs are marked with CCACCA and rapidly degraded. This chain is Multifunctional CCA protein, found in Shewanella sp. (strain MR-4).